A 530-amino-acid chain; its full sequence is Phosphoenolpyruvate carboxykinase (ATP) (530 aa).

Substrate contacts are provided by Arg-56, Tyr-196, and Lys-202. ATP is bound by residues Lys-202, His-221, and 237–245 (GLSGTGKTT). Positions 202 and 221 each coordinate Mn(2+). Asp-258 provides a ligand contact to Mn(2+). ATP contacts are provided by residues Glu-286, Arg-322, 438 to 439 (RI), and Thr-444. Residue Arg-322 coordinates substrate.

It belongs to the phosphoenolpyruvate carboxykinase (ATP) family. In terms of assembly, monomer. The cofactor is Mn(2+).

It localises to the cytoplasm. It carries out the reaction oxaloacetate + ATP = phosphoenolpyruvate + ADP + CO2. It participates in carbohydrate biosynthesis; gluconeogenesis. Functionally, involved in the gluconeogenesis. Catalyzes the conversion of oxaloacetate (OAA) to phosphoenolpyruvate (PEP) through direct phosphoryl transfer between the nucleoside triphosphate and OAA. The sequence is that of Phosphoenolpyruvate carboxykinase (ATP) from Photobacterium profundum (strain SS9).